The primary structure comprises 212 residues: Ras-related protein Rab-17 (212 aa).

Residue Ser29 is modified to Phosphoserine. Residues Gly31, Lys32, Ser33, and Thr50 each coordinate GTP. Positions 33, 50, and 73 each coordinate Mg(2+). Residues 43-54 (DFKSILPTVGCA) carry the Switch 1 motif. Positions 75 to 91 (AGQEKYHSVCHLYFRGA) match the Switch 2 motif. Residues Gly76, Asn132, Lys133, Asp135, and Ala163 each contribute to the GTP site. 2 S-geranylgeranyl cysteine lipidation sites follow: Cys209 and Cys210.

The protein belongs to the small GTPase superfamily. Rab family. Mg(2+) serves as cofactor. As to expression, expressed in melanocytes (at protein level).

Its subcellular location is the recycling endosome membrane. The protein resides in the melanosome. It is found in the cell projection. The protein localises to the dendrite. The enzyme catalyses GTP + H2O = GDP + phosphate + H(+). Its activity is regulated as follows. Regulated by guanine nucleotide exchange factors (GEFs) which promote the exchange of bound GDP for free GTP. Regulated by GTPase activating proteins (GAPs) which increase the GTP hydrolysis activity. Inhibited by GDP dissociation inhibitors (GDIs). In terms of biological role, the small GTPases Rab are key regulators of intracellular membrane trafficking, from the formation of transport vesicles to their fusion with membranes. Rabs cycle between an inactive GDP-bound form and an active GTP-bound form that is able to recruit to membranes different set of downstream effectors directly responsible for vesicle formation, movement, tethering and fusion. RAB17 is involved in transcytosis, the directed movement of endocytosed material through the cell and its exocytosis from the plasma membrane at the opposite side. Mainly observed in epithelial cells, transcytosis mediates for instance, the transcellular transport of immunoglobulins from the basolateral surface to the apical surface. Most probably controls membrane trafficking through apical recycling endosomes in a post-endocytic step of transcytosis. Required for melanosome transport and release from melanocytes, it also regulates dendrite and dendritic spine development. May also play a role in cell migration. The polypeptide is Ras-related protein Rab-17 (Homo sapiens (Human)).